Reading from the N-terminus, the 644-residue chain is Chaperone protein DnaK (644 aa).

Threonine 199 carries the phosphothreonine; by autocatalysis modification. Basic and acidic residues predominate over residues 550-584 (ADKLDESEKQRAQDEIKRGREAMESGDLERMKASR). Disordered regions lie at residues 550–586 (ADKL…SRDS) and 599–644 (YSQA…EDKK). Over residues 600–623 (SQAGPEQGAPGAEAGAGASQGASG) the composition is skewed to low complexity.

The protein belongs to the heat shock protein 70 family.

Functionally, acts as a chaperone. This is Chaperone protein DnaK from Leptospira biflexa serovar Patoc (strain Patoc 1 / Ames).